A 262-amino-acid polypeptide reads, in one-letter code: Abhydrolase domain-containing protein ACTT2-2 (262 aa).

The Peroxisomal targeting signal type 1 signature appears at S260–L262.

The protein belongs to the AB hydrolase superfamily. AKT2 hydrolase family.

It is found in the peroxisome. It functions in the pathway mycotoxin biosynthesis. Abhydrolase domain-containing protein; part of the gene clusters that mediate the biosynthesis of the host-selective toxins (HSTs) ACT-toxins responsible for brown spot of tangerine disease by the tangerine pathotype which affects tangerines and mandarins. ACT-toxins consist of three moieties, 9,10-epoxy-8-hydroxy-9-methyl-decatrienoic acid (EDA), valine and a polyketide. ACT-toxin I is toxic to both citrus and pear; toxin II the 5''-deoxy derivative of ACT-toxin I, is highly toxic to pear and slightly toxic to citrus. On cellular level, ACT-toxins affect plasma membrane of susceptible cells and cause a sudden increase in loss of K(+) after a few minutes of toxin treatment. The acyl-CoA ligase ACTT1, the hydrolase ACTT2, the enoyl-CoA hydratases ACTT3 and ACTT6, and the acyl-CoA synthetase ACTT5 are all involved in the biosynthesis of the AK-, AF- and ACT-toxin common 9,10-epoxy-8-hydroxy-9-methyl-decatrienoic acid (EDA) structural moiety. The exact role of each enzyme, and of additional enzymes identified within the AF-toxin clusters have still to be determined. On the other hand, ACTTS1 to ACTTS4 are specific to the tangerine pathotype. The function of ACTTS3 is to elongate the polyketide chain portion of ACT-toxin that is unique to this toxin. The enoyl-reductase ACTTS2 might complement the missing enoyl-reductase (ER) domain in ACTTS3 in the synthesis of the polyketide portion of ACT-toxin. The roles of the nonribosomal peptide synthetases-related proteins ACTTS1 and ACTTS4 have also still not been elucidated. This chain is Abhydrolase domain-containing protein ACTT2-2 (ACTT2-2), found in Alternaria alternata (Alternaria rot fungus).